A 185-amino-acid chain; its full sequence is Translation initiation factor IF-3, chloroplastic (185 aa).

It belongs to the IF-3 family. As to quaternary structure, monomer.

The protein localises to the plastid. The protein resides in the chloroplast. Functionally, IF-3 binds to the 30S ribosomal subunit and shifts the equilibrium between 70S ribosomes and their 50S and 30S subunits in favor of the free subunits, thus enhancing the availability of 30S subunits on which protein synthesis initiation begins. The chain is Translation initiation factor IF-3, chloroplastic from Cyanidium caldarium (Red alga).